A 598-amino-acid chain; its full sequence is MSFMRGGSECSTGRNPLSQFTKHTAEDRSLQHDRVAGPSGGRVGGMRSNTGEMSQQDREMMARFGAAGPEQSSFNYEQMRHELHNMGAQGGQIPQVPSQQGAANGGQWARDFGGQQTAPGAAPQDAKNWNAEFQRGGSPAEAMQQQGPGPMQGGMGMGGMPMYGMARPMYSGMSANMAPQFQPQQANARVVELDEQNWEEQFKQMDSAVGKGKEVEEQTAETATATETVTETETTTEDKPMDIKNMDFENIWKNLQVNVLDNMDEWLEETNSPAWERDFHEYTHNRPEFADYQFEENNQFMEHPDPFKIGVELMETGGRLSEAALAFEAAVQKNTEHAEAWGRLGACQAQNEKEDPAIRALERCIKLEPGNLSALMNLSVSYTNEGYENAAYATLERWLATKYPEVVDQARNQEPRLGNEDKFQLHSRVTELFIRAAQLSPDGANIDADVQVGLGVLFYGNEEYDKAIDCFNAAIAVRPDDALLWNRLGATLANSHRSEEAIDAYYKALELRPSFVRARYNLGVSCINIGCYKEAAQYLLGALSMHKVEGVQDDVLANQSTNLYDTLKRVFLGMDRRDLVAKVGNGMDVNQFRNEFEF.

Disordered regions lie at residues 1–54 (MSFM…GEMS), 135–154 (RGGS…MQGG), and 208–237 (AVGK…TTTE). Residues 9-22 (ECSTGRNPLSQFTK) are compositionally biased toward polar residues. A Glycyl cysteine thioester (Cys-Gly) (interchain with G-Cter in ubiquitin) cross-link involves residue Cys-10. Residue Lys-22 forms a Glycyl lysine isopeptide (Lys-Gly) (interchain with G-Cter in ubiquitin) linkage. The span at 23-35 (HTAEDRSLQHDRV) shows a compositional bias: basic and acidic residues. Positions 220–233 (AETATATETVTETE) are enriched in low complexity. 7 TPR repeats span residues 304–337 (PDPF…NTEH), 338–371 (AEAW…EPGN), 372–409 (LSAL…VVDQ), 410–447 (ARNQ…ANID), 448–481 (ADVQ…RPDD), 482–515 (ALLW…RPSF), and 516–549 (VRAR…HKVE).

The protein belongs to the peroxisomal targeting signal receptor family. Post-translationally, ubiquitination at Cys-10 is UBC4-independent but requires the presence of PEX4. Ubiquitination at Lys-22 is UBC4-dependent.

Its subcellular location is the cytoplasm. It localises to the peroxisome membrane. Functionally, binds to the C-terminal PTS1-type tripeptide peroxisomal targeting signal (SKL-type) and plays an essential role in peroxisomal protein import. The polypeptide is Peroxisomal targeting signal receptor (PAY32) (Yarrowia lipolytica (strain CLIB 122 / E 150) (Yeast)).